The primary structure comprises 427 residues: MGSVRTNRYSIVSSEEDGMKLATMAVANGFGNGKSKVHTRQQCRSRFVKKDGHCNVQFINVGEKGQRYLADIFTTCVDIRWRWMLVIFCLTFILSWLFFGCVFWLIALLHGDLENQENNKPCVSQVSSFTAAFLFSIETQTTIGYGFRCVTDECPIAVFMVVFQSIVGCIIDAFIIGAVMAKMAKPKKRNETLVFSHNAVVAMRDGKLCLMWRVGNLRKSHLVEAHVRAQLLKSRITSEGEYIPLDEIDINVGFDSGIDRIFLVSPITIVHEIDEDSPLYDLSKQDMDNADFEIVVILEGMVEATAMTTQCRSSYLANEILWGHRYEPVLFEEKNYYKVDYSRFHKTYEVPNTPICSARDLAEKKYILSNANSFCYENEVALTSKEEDEIDTGVPESTSTDTHPDMDHHNQAGVPLEPRPLRRESEI.

Residues 1–81 (MGSVRTNRYS…IFTTCVDIRW (81 aa)) are Cytoplasmic-facing. Residues 82 to 106 (RWMLVIFCLTFILSWLFFGCVFWLI) form a helical membrane-spanning segment. Residues 107-128 (ALLHGDLENQENNKPCVSQVSS) lie on the Extracellular side of the membrane. The helical; Pore-forming intramembrane region spans 129–140 (FTAAFLFSIETQ). Residues 141–147 (TTIGYGF) constitute an intramembrane region (pore-forming). The Selectivity filter signature appears at 142-147 (TIGYGF). Residues 148–156 (RCVTDECPI) lie on the Extracellular side of the membrane. Residues 157–178 (AVFMVVFQSIVGCIIDAFIIGA) traverse the membrane as a helical segment. The Cytoplasmic segment spans residues 179 to 427 (VMAKMAKPKK…PRPLRRESEI (249 aa)). Positions 181–208 (AKMAKPKKRNETLVFSHNAVVAMRDGKL) are polyphosphoinositide (PIP2)-binding. Residues 386–427 (EEDEIDTGVPESTSTDTHPDMDHHNQAGVPLEPRPLRRESEI) form a disordered region. A PDZ-binding motif is present at residues 425 to 427 (SEI).

Belongs to the inward rectifier-type potassium channel (TC 1.A.2.1) family. KCNJ2 subfamily. As to quaternary structure, homotetramer. Homomultimeric and heteromultimeric association with KCNJ4/Kir2.3, resulting in an enhanced G-protein-induced current. Associates, via its PDZ-recognition domain, with a complex containing LIN7A, LIN7B, LIN7C, DLG1, CASK and APBA1. In terms of tissue distribution, found in the apical basilar papilla of the inner ear, brain, muscle, cerebellum, heart and liver.

It is found in the cell membrane. It localises to the sarcolemma. Its subcellular location is the T-tubule. The catalysed reaction is K(+)(in) = K(+)(out). Activated by phosphatidylinositol 4,5 biphosphate (PtdIns(4,5)P2). Functionally, inward rectifier potassium channels are characterized by a greater tendency to allow potassium to flow into the cell rather than out of it. Their voltage dependence is regulated by the concentration of extracellular potassium; as external potassium is raised, the voltage range of the channel opening shifts to more positive voltages. The inward rectification is mainly due to the blockage of outward current by internal magnesium. Can be blocked by external barium. Probably participates in establishing action potential waveform and excitability of neuronal and muscle tissues. This chain is Inward rectifier potassium channel 2 (KCNJ2), found in Gallus gallus (Chicken).